The primary structure comprises 490 residues: POC1 centriolar protein homolog B (490 aa).

WD repeat units follow at residues 16–55, 58–97, 100–139, 142–181, 184–223, 226–265, and 268–307; these read GHKD…RAFR, GHTD…ESTV, AHTA…FLYS, RHTN…CINI, DYGG…LIQH, VHNA…LIYT, and GHKG…LNYR. Over residues 375-388 the composition is skewed to polar residues; it reads DGASSSRAQFTSGM. Residues 375 to 427 form a disordered region; that stretch reads DGASSSRAQFTSGMDSGPFRTHTQAREEEDENQEERFAGGMTASPAERSGIPS. Positions 431 to 463 form a coiled coil; that stretch reads STLENIVQQLDILTQTVAVLEERLTLTEDKLRT.

This sequence belongs to the WD repeat POC1 family.

Its subcellular location is the cytoplasm. The protein localises to the cytoskeleton. The protein resides in the microtubule organizing center. It localises to the centrosome. It is found in the centriole. Plays an important role in centriole assembly and/or stability and ciliogenesis. Involved in early steps of centriole duplication, as well as in the later steps of centriole length control. The protein is POC1 centriolar protein homolog B of Danio rerio (Zebrafish).